Reading from the N-terminus, the 79-residue chain is Large ribosomal subunit protein bL28 (79 aa).

Residues 1 to 26 (MAKVCQVTGKRPQSGNNVSHANKKTN) form a disordered region. Over residues 11–20 (RPQSGNNVSH) the composition is skewed to polar residues.

The protein belongs to the bacterial ribosomal protein bL28 family.

This chain is Large ribosomal subunit protein bL28, found in Coxiella burnetii (strain CbuK_Q154) (Coxiella burnetii (strain Q154)).